The sequence spans 295 residues: Aquaporin NIP2-1 (295 aa).

Transmembrane regions (helical) follow at residues 49–69 (VVSE…AAGI) and 83–103 (SVAG…ISGA). The NPA 1 motif lies at 106–108 (NPA). 3 helical membrane passes run 124–146 (VPFY…KAVL), 164–184 (SLVI…AVAT), and 192–212 (LAGL…GAVS). Residues 217 to 219 (NPA) carry the NPA 2 motif. A helical membrane pass occupies residues 230–250 (LYTGLWIYFLGPVLGTLSGAW).

Belongs to the MIP/aquaporin (TC 1.A.8) family. NIP (TC 1.A.8.12) subfamily.

The protein localises to the membrane. In terms of biological role, aquaporins facilitate the transport of water and small neutral solutes across cell membranes. The polypeptide is Aquaporin NIP2-1 (NIP2-1) (Zea mays (Maize)).